A 745-amino-acid polypeptide reads, in one-letter code: 5-methyltetrahydropteroyltriglutamate--homocysteine methyltransferase (745 aa).

2 residues coordinate 5-methyltetrahydropteroyltri-L-glutamate: K19 and N115. Residues 420–422 (IGS) and E473 contribute to the L-homocysteine site. L-methionine contacts are provided by residues 420–422 (IGS) and E473. Residues D478, Y501, 504 to 505 (RA), and W550 each bind 5-methyltetrahydropteroyltri-L-glutamate. D588 lines the L-homocysteine pocket. Residue D588 coordinates L-methionine. Residues H630, C632, and E654 each coordinate Zn(2+). The Proton donor role is filled by H683. Position 715 (C715) interacts with Zn(2+).

The protein belongs to the vitamin-B12 independent methionine synthase family. Requires Zn(2+) as cofactor.

It carries out the reaction 5-methyltetrahydropteroyltri-L-glutamate + L-homocysteine = tetrahydropteroyltri-L-glutamate + L-methionine. The protein operates within amino-acid biosynthesis; L-methionine biosynthesis via de novo pathway; L-methionine from L-homocysteine (MetE route): step 1/1. Its function is as follows. Catalyzes the transfer of a methyl group from 5-methyltetrahydrofolate to homocysteine resulting in methionine formation. The sequence is that of 5-methyltetrahydropteroyltriglutamate--homocysteine methyltransferase from Streptococcus mutans serotype c (strain ATCC 700610 / UA159).